The primary structure comprises 274 residues: Thiamine kinase (274 aa).

It belongs to the thiamine kinase family.

The catalysed reaction is thiamine + ATP = thiamine phosphate + ADP + H(+). The protein operates within cofactor biosynthesis; thiamine diphosphate biosynthesis; thiamine phosphate from thiamine: step 1/1. Its function is as follows. Catalyzes the ATP-dependent phosphorylation of thiamine to thiamine phosphate. Is involved in thiamine salvage. The protein is Thiamine kinase of Salmonella paratyphi A (strain ATCC 9150 / SARB42).